The primary structure comprises 368 residues: MLGAIHLGVLAACFVLFVPMAMAGWHLSRNKMLFFSGALFISLAVCVHLTPYFPSVSDIVASVSSVVVYDHRISCINEVNQIVWDVKPVPNPESVRRNNGSTKLDYFVKNWDWMKSRKVLSCEFQKLDKFDVSDLLNGSWVVVAGDSQARFVALSLLNLVLGSDSKAMDSVRGDLFRRHSDYSIVVKEIGMKLDFVWAPYEKDLDDLVVSYKKMKKYPDVVIMGTGLWHMLHVNNASDFGFRLRQLSSHVESLVPLTPKEQEGGGSVSGRSVHLFWIGMPVLINGMLNTDEKKEKMSDTVWHEYDRSLGESKILRQMGGPLILLDIQSFTWNCGPQCTLDGMHYDSAVYDAAVHVMLNALLIESHQSL.

Over 1 to 32 (MLGAIHLGVLAACFVLFVPMAMAGWHLSRNKM) the chain is Cytoplasmic. A helical membrane pass occupies residues 33–53 (LFFSGALFISLAVCVHLTPYF). Residues 54–368 (PSVSDIVASV…ALLIESHQSL (315 aa)) lie on the Lumenal side of the membrane. Asn-99, Asn-137, and Asn-235 each carry an N-linked (GlcNAc...) asparagine glycan.

Its subcellular location is the golgi apparatus membrane. Its function is as follows. Component of the plant cell wall polysaccharide acetylation pathway. Does not directly catalyze O-acetylation of xyloglucan but exhibits weak acetylesterase activity in vitro. This Arabidopsis thaliana (Mouse-ear cress) protein is Protein ALTERED XYLOGLUCAN 9.